Consider the following 599-residue polypeptide: Omega-hydroxyceramide transacylase (599 aa).

A PNPLA domain is found at 16–185 (ISFSGSGFLS…TSMQPCSFWT (170 aa)). The GXSXG motif lies at 51 to 55 (GTSAG). Residue serine 53 is the Nucleophile of the active site. The Proton acceptor role is filled by aspartate 172. A DGA/G motif is present at residues 172–174 (DGG). A disordered region spans residues 289–563 (PPPPSLQNLP…PASKLKSAPC (275 aa)). Polar residues-rich tracts occupy residues 325 to 335 (SSAAPSVQTPE) and 350 to 362 (VSISKQPSVSPLS). The span at 443–454 (SPESPRLLLRSS) shows a compositional bias: low complexity. The segment covering 468 to 478 (PLSPSTPPAGP) has biased composition (pro residues). Residues 490 to 501 (ATGSPALSQLTG) show a composition bias toward polar residues. Residues 551 to 563 (SKKPASKLKSAPC) show a composition bias toward low complexity.

Specifically expressed in skin by keratinocytes, at the boundary area between the nucleated stratum granulosum and the denucleated stratum corneum in the epidermis (at protein level). Also expressed in stomach and other surface lining tissues like intestine and tongue. Also detected in testis as well as in other tissues but at very low level.

It localises to the cytoplasm. The enzyme catalyses an N-(omega-hydroxy-ultra-long chain fatty acyl)-sphingoid base + a (9Z,12Z)-octadecadienoyl-containing triacyl-sn-glycerol = an N-[omega-(9Z,12Z-octadecadienoyloxy)-O-ultra-long chain fatty acyl]-sphingoid base + a diacylglycerol. The catalysed reaction is an N-(omega-hydroxy-ultra-long chain fatty acyl)-sphing-4-enine + a (9Z,12Z)-octadecadienoyl-containing triacyl-sn-glycerol = an N-(omega-(9Z,12Z-octadecadienoyloxy)-ultra-long chain fatty acyl)-sphing-4-enine + a diacylglycerol. It carries out the reaction N-(28-hydroxyoctacosanoyl)-sphing-4-enine + a (9Z,12Z)-octadecadienoyl-containing triacyl-sn-glycerol = N-(28-(9Z,12Z-octadecadienoyloxy)-octacosanoyl)-sphing-4-enine + a diacylglycerol. It catalyses the reaction N-(30-hydroxytriacontanoyl)-sphing-4-enine + 1,2,3-tri-(9Z,12Z)-octadecadienoylglycerol = N-[30-(9Z,12Z-octadecadienoyloxy)-triacontanoyl]-sphing-4-enine + di-(9Z,12Z)-octadecadienoylglycerol. The enzyme catalyses N-(32-hydroxydotriacontanoyl)-sphing-4-enine + a (9Z,12Z)-octadecadienoyl-containing triacyl-sn-glycerol = N-(32-(9Z,12Z-octadecadienoyloxy)-dotricontanoyl)-sphing-4-enine + a diacylglycerol. The catalysed reaction is N-(32-hydroxydotriacontenoyl)-sphing-4-enine + a (9Z,12Z)-octadecadienoyl-containing triacyl-sn-glycerol = an N-(32-(9Z,12Z-octadecadienoyloxy)-dotriacontenoyl)-sphing-4-enine + a diacylglycerol. It carries out the reaction an N-(34-hydroxytetratriacontenoyl)-sphing-4-enine + a (9Z,12Z)-octadecadienoyl-containing triacyl-sn-glycerol = an N-(34-(9Z,12Z-octadecadienoyloxy)-tetratriacontenoyl)-sphing-4-enine + a diacylglycerol. It catalyses the reaction an N-(34-hydroxytetratriacontadienoyl)-sphing-4-enine + a (9Z,12Z)-octadecadienoyl-containing triacyl-sn-glycerol = an N-(34-(9Z,12Z-octadecadienoyloxy)-tetratriacontadienoyl)-sphing-4-enine + a diacylglycerol. The enzyme catalyses an N-(36-hydroxyhexatriacontenoyl)-sphing-4-enine + a (9Z,12Z)-octadecadienoyl-containing triacyl-sn-glycerol = an N-(36-(9Z,12Z-octadecadienoyloxy)-hexatriacontenoyl)-sphing-4-enine + a diacylglycerol. The catalysed reaction is an N-(36-hydroxyhexatriacontadienoyl)-sphing-4-enine + a (9Z,12Z)-octadecadienoyl-containing triacyl-sn-glycerol = an N-(36-(9Z,12Z-octadecadienoyloxy)-hexatriacontadienoyl)-sphing-4-enine + a diacylglycerol. It carries out the reaction an N-(38-hydroxyoctatriacontenoyl)-sphing-4-enine + a (9Z,12Z)-octadecadienoyl-containing triacyl-sn-glycerol = an N-(38-(9Z,12Z-octadecadienoyloxy)-octatriacontenoyl)-sphing-4-enine + a diacylglycerol. Its function is as follows. Omega-hydroxyceramide transacylase involved in the synthesis of omega-O-acylceramides (esterified omega-hydroxyacyl-sphingosine; EOS), which are extremely hydrophobic lipids involved in skin barrier formation. Catalyzes the last step of the synthesis of omega-O-acylceramides by transferring linoleic acid from triglycerides to an omega-hydroxyceramide. Omega-O-acylceramides, are required for the biogenesis of lipid lamellae in the stratum corneum and the formation of the cornified lipid envelope which are essential for the epidermis barrier function. These lipids also play a role in keratinocyte differentiation. May also act on omega-hydroxylated ultra-long chain fatty acids (omega-OH ULCFA) and acylglucosylceramides (GlcEOS). The chain is Omega-hydroxyceramide transacylase from Mus musculus (Mouse).